Here is a 749-residue protein sequence, read N- to C-terminus: Ribosome-releasing factor 2, mitochondrial (749 aa).

The transit peptide at 1–22 directs the protein to the mitochondrion; the sequence is MLLLLCNRSVVPRGIRRILRTA. In terms of domain architecture, tr-type G spans 44-322; the sequence is KNIRNIGILA…AVLKYLPAPN (279 aa). GTP contacts are provided by residues 53 to 60, 117 to 121, and 171 to 174; these read AHIDGGKT, DTPGH, and NKMD.

This sequence belongs to the TRAFAC class translation factor GTPase superfamily. Classic translation factor GTPase family. EF-G/EF-2 subfamily.

The protein localises to the mitochondrion. In terms of biological role, mitochondrial GTPase that mediates the disassembly of ribosomes from messenger RNA at the termination of mitochondrial protein biosynthesis. Not involved in the GTP-dependent ribosomal translocation step during translation elongation. The chain is Ribosome-releasing factor 2, mitochondrial from Culex quinquefasciatus (Southern house mosquito).